We begin with the raw amino-acid sequence, 402 residues long: Tol-Pal system protein TolB (402 aa).

The N-terminal stretch at 1 to 17 (MKKIVAIFLVFLGSLWA) is a signal peptide.

It belongs to the TolB family. In terms of assembly, the Tol-Pal system is composed of five core proteins: the inner membrane proteins TolA, TolQ and TolR, the periplasmic protein TolB and the outer membrane protein Pal. They form a network linking the inner and outer membranes and the peptidoglycan layer.

It localises to the periplasm. Part of the Tol-Pal system, which plays a role in outer membrane invagination during cell division and is important for maintaining outer membrane integrity. The sequence is that of Tol-Pal system protein TolB from Campylobacter jejuni subsp. jejuni serotype O:2 (strain ATCC 700819 / NCTC 11168).